The primary structure comprises 87 residues: Transcription factor ILI4 (87 aa).

One can recognise a bHLH domain in the interval 1-54 (MSSRRSSRSSVSEEEINELISKLQSLLPSSRRRGANQASTTKLLKETCSYIKSL).

It belongs to the bHLH protein family. As to quaternary structure, interacts with LO9-177. In terms of tissue distribution, expressed in phloem of leaf blades and sheaths, lamina joints, filaments before anthesis, vasculare bundles of the ovule, lemma and palea, and embryos.

The protein resides in the cytoplasm. Functionally, atypical and probable non DNA-binding bHLH transcription factor that acts as a positive regulator of brassinosteroid (BR) response. Controls lamina inclination by participating in two BR signaling pathways involving BRI1 and RGA1. Involved in the RLI1-dependent modulation of leaf inclination by promoting lamina joint cell elongation, especially in response to phosphate (Pi) availability. This chain is Transcription factor ILI4 (ILI4), found in Oryza sativa subsp. japonica (Rice).